The sequence spans 85 residues: Beta-insect depressant toxin Lqh-dprIT3a (85 aa).

The N-terminal stretch at 1–21 is a signal peptide; the sequence is MKLLLLLTISASMLIEGLVNA. The 61-residue stretch at 22 to 82 folds into the LCN-type CS-alpha/beta domain; it reads DGYIRGGDGC…EWDYETNTCG (61 aa). Intrachain disulfides connect cysteine 31/cysteine 81, cysteine 35/cysteine 56, cysteine 42/cysteine 63, and cysteine 46/cysteine 65. Glycine 82 carries the post-translational modification Glycine amide.

Belongs to the long (4 C-C) scorpion toxin superfamily. Sodium channel inhibitor family. Beta subfamily. Expressed by the venom gland.

It is found in the secreted. In terms of biological role, depressant insect beta-toxins cause a transient contraction paralysis followed by a slow flaccid paralysis. They bind voltage-independently at site-4 of sodium channels (Nav) and block action potentials, primarily by depolarizing the axonal membrane and suppressing the sodium current. This depressant toxin is active only on insects. It is found in a relatively small amount in the venom, and its activity on insects is 10-fold higher compared to other known depressant toxins. This chain is Beta-insect depressant toxin Lqh-dprIT3a, found in Leiurus hebraeus (Hebrew deathstalker scorpion).